The sequence spans 375 residues: DNA replication and repair protein RecF (375 aa).

G30–T37 is a binding site for ATP.

It belongs to the RecF family.

Its subcellular location is the cytoplasm. In terms of biological role, the RecF protein is involved in DNA metabolism; it is required for DNA replication and normal SOS inducibility. RecF binds preferentially to single-stranded, linear DNA. It also seems to bind ATP. This chain is DNA replication and repair protein RecF, found in Bacillus cereus (strain G9842).